The primary structure comprises 309 residues: L-aminoadipate-semialdehyde dehydrogenase-phosphopantetheinyl transferase (309 aa).

Residues Arg-47, 86–91 (RTAKGK), and 108–111 (NISH) contribute to the CoA site. Mg(2+)-binding residues include Asp-129 and Glu-181. 181–185 (ESFIK) is a binding site for CoA. Position 258 is a phosphoserine (Ser-258).

Belongs to the P-Pant transferase superfamily. AcpS family. Monomer. Mg(2+) serves as cofactor. Detected in heart, skeletal muscle, placenta, testis, brain, pancreas, liver and kidney.

Its subcellular location is the cytoplasm. The protein resides in the cytosol. It carries out the reaction apo-[ACP] + CoA = holo-[ACP] + adenosine 3',5'-bisphosphate + H(+). The enzyme catalyses apo-[ACP] + acetyl-CoA = acetyl-[ACP] + adenosine 3',5'-bisphosphate + H(+). Its function is as follows. Catalyzes the post-translational modification of target proteins by phosphopantetheine. Can transfer the 4'-phosphopantetheine moiety from coenzyme A, regardless of whether the CoA is presented in the free thiol form or as an acetyl thioester, to a serine residue of a broad range of acceptors including the acyl carrier domain of FASN. In Homo sapiens (Human), this protein is L-aminoadipate-semialdehyde dehydrogenase-phosphopantetheinyl transferase (AASDHPPT).